The chain runs to 322 residues: uncharacterized protein (322 aa).

Positions 1–32 (MRDGIGKRAASALFLCGVLVMLAVSSAIVSSA) are cleaved as a signal peptide.

This is an uncharacterized protein from Bacillus subtilis (strain 168).